We begin with the raw amino-acid sequence, 727 residues long: Endothelin-converting enzyme homolog (727 aa).

Residues 1 to 44 (MSFNFSRYSGAYTTTFSFLLLALLIVSAVLLSRPYAPALLHAEE) are Cytoplasmic-facing. A helical; Signal-anchor for type II membrane protein membrane pass occupies residues 45-65 (AYCVSMSCVTAAASVLSLMDA). Positions 46–727 (YCVSMSCVTA…MNPVHKCEVW (682 aa)) constitute a Peptidase M13 domain. 5 disulfides stabilise this stretch: Cys-47–Cys-52, Cys-70–Cys-712, Cys-78–Cys-672, Cys-134–Cys-392, and Cys-601–Cys-724. At 66 to 727 (TADPCSDFYQ…MNPVHKCEVW (662 aa)) the chain is on the extracellular side. 9 N-linked (GlcNAc...) asparagine glycosylation sites follow: Asn-138, Asn-160, Asn-164, Asn-169, Asn-222, Asn-309, Asn-337, Asn-340, and Asn-511. His-564 lines the Zn(2+) pocket. Residue Glu-565 is part of the active site. His-568 is a Zn(2+) binding site. 2 N-linked (GlcNAc...) asparagine glycosylation sites follow: Asn-589 and Asn-608. Glu-624 serves as a coordination point for Zn(2+). Asp-628 (proton donor) is an active-site residue. Asn-656 carries N-linked (GlcNAc...) asparagine glycosylation.

This sequence belongs to the peptidase M13 family. Requires Zn(2+) as cofactor. Highly expressed in brain and midgut, and to a lesser extent in fat body, ovaries, testes and haemocytes.

It is found in the cell membrane. This Locusta migratoria (Migratory locust) protein is Endothelin-converting enzyme homolog.